A 72-amino-acid chain; its full sequence is Translation initiation factor IF-1 1 (72 aa).

The 72-residue stretch at 1 to 72 (MSKEDVIQMQ…TKGRIVFRAK (72 aa)) folds into the S1-like domain.

It belongs to the IF-1 family. In terms of assembly, component of the 30S ribosomal translation pre-initiation complex which assembles on the 30S ribosome in the order IF-2 and IF-3, IF-1 and N-formylmethionyl-tRNA(fMet); mRNA recruitment can occur at any time during PIC assembly.

The protein localises to the cytoplasm. Its function is as follows. One of the essential components for the initiation of protein synthesis. Stabilizes the binding of IF-2 and IF-3 on the 30S subunit to which N-formylmethionyl-tRNA(fMet) subsequently binds. Helps modulate mRNA selection, yielding the 30S pre-initiation complex (PIC). Upon addition of the 50S ribosomal subunit IF-1, IF-2 and IF-3 are released leaving the mature 70S translation initiation complex. The chain is Translation initiation factor IF-1 1 from Thiobacillus denitrificans (strain ATCC 25259 / T1).